The following is a 408-amino-acid chain: Argininosuccinate synthase (408 aa).

ATP contacts are provided by residues 10–18 (AYSGGLDTS) and A37. The L-citrulline site is built by Y90 and S95. G120 lines the ATP pocket. L-aspartate is bound by residues T122, N126, and D127. Residue N126 participates in L-citrulline binding. Residues R130, S181, S190, E266, and Y278 each coordinate L-citrulline.

It belongs to the argininosuccinate synthase family. Type 1 subfamily. In terms of assembly, homotetramer.

Its subcellular location is the cytoplasm. It carries out the reaction L-citrulline + L-aspartate + ATP = 2-(N(omega)-L-arginino)succinate + AMP + diphosphate + H(+). It participates in amino-acid biosynthesis; L-arginine biosynthesis; L-arginine from L-ornithine and carbamoyl phosphate: step 2/3. In Chromobacterium violaceum (strain ATCC 12472 / DSM 30191 / JCM 1249 / CCUG 213 / NBRC 12614 / NCIMB 9131 / NCTC 9757 / MK), this protein is Argininosuccinate synthase.